Here is a 264-residue protein sequence, read N- to C-terminus: DNA repair protein RecO (264 aa).

It belongs to the RecO family.

In terms of biological role, involved in DNA repair and RecF pathway recombination. This Prosthecochloris aestuarii (strain DSM 271 / SK 413) protein is DNA repair protein RecO.